A 470-amino-acid polypeptide reads, in one-letter code: AAA-ATPase At5g40000 (470 aa).

The signal sequence occupies residues 1–30 (MMMMGDSFGSIGSSMASLFFLWATIQQIFP). 248–255 (GPPGTGKS) provides a ligand contact to ATP.

The protein belongs to the AAA ATPase family. BCS1 subfamily. Mg(2+) serves as cofactor.

The catalysed reaction is ATP + H2O = ADP + phosphate + H(+). This Arabidopsis thaliana (Mouse-ear cress) protein is AAA-ATPase At5g40000.